Reading from the N-terminus, the 301-residue chain is Probable alpha-L-glutamate ligase (301 aa).

One can recognise an ATP-grasp domain in the interval 104 to 287 (LQLLSRRGIG…VAGMIIEHLE (184 aa)). ATP is bound by residues K141, 178–179 (EY), D187, and 211–213 (RSN). Mg(2+)-binding residues include D248, E260, and N262. The Mn(2+) site is built by D248, E260, and N262.

The protein belongs to the RimK family. It depends on Mg(2+) as a cofactor. The cofactor is Mn(2+).

The protein is Probable alpha-L-glutamate ligase of Pseudomonas entomophila (strain L48).